A 273-amino-acid polypeptide reads, in one-letter code: Large ribosomal subunit protein uL2 (273 aa).

2 disordered regions span residues 28-53 (KPFA…TTRH) and 221-273 (RGTA…RRTK). The segment covering 39-48 (KSGGRNNNGR) has biased composition (low complexity).

Belongs to the universal ribosomal protein uL2 family. Part of the 50S ribosomal subunit. Forms a bridge to the 30S subunit in the 70S ribosome.

One of the primary rRNA binding proteins. Required for association of the 30S and 50S subunits to form the 70S ribosome, for tRNA binding and peptide bond formation. It has been suggested to have peptidyltransferase activity; this is somewhat controversial. Makes several contacts with the 16S rRNA in the 70S ribosome. The chain is Large ribosomal subunit protein uL2 from Pectobacterium atrosepticum (strain SCRI 1043 / ATCC BAA-672) (Erwinia carotovora subsp. atroseptica).